The chain runs to 562 residues: 3-(3-hydroxy-phenyl)propionate/3-hydroxycinnamic acid hydroxylase (562 aa).

FAD is bound by residues 8-37 and 275-285; these read DVVI…IIEE and FRKGRMLLAGD.

It belongs to the PheA/TfdB FAD monooxygenase family. It depends on FAD as a cofactor.

It catalyses the reaction 3-(3-hydroxyphenyl)propanoate + NADH + O2 + H(+) = 3-(2,3-dihydroxyphenyl)propanoate + NAD(+) + H2O. The catalysed reaction is (2E)-3-(3-hydroxyphenyl)prop-2-enoate + NADH + O2 + H(+) = (2E)-3-(2,3-dihydroxyphenyl)prop-2-enoate + NAD(+) + H2O. The protein operates within aromatic compound metabolism; 3-phenylpropanoate degradation. Functionally, catalyzes the insertion of one atom of molecular oxygen into position 2 of the phenyl ring of 3-(3-hydroxyphenyl)propionate (3-HPP) and hydroxycinnamic acid (3HCI). In Mycolicibacterium smegmatis (strain ATCC 700084 / mc(2)155) (Mycobacterium smegmatis), this protein is 3-(3-hydroxy-phenyl)propionate/3-hydroxycinnamic acid hydroxylase.